Consider the following 327-residue polypeptide: Probable cell division protein WhiA (327 aa).

The H-T-H motif DNA-binding region spans 275–308; that stretch reads SLEELGQLADPPMTKDAVAGRIRRLLSMADRRAR.

Belongs to the WhiA family.

Its function is as follows. Involved in cell division and chromosome segregation. This Nocardia farcinica (strain IFM 10152) protein is Probable cell division protein WhiA.